We begin with the raw amino-acid sequence, 535 residues long: KNR4/SMI1 homolog (535 aa).

Residues Glu354–Arg363 show a composition bias toward basic and acidic residues. Residues Glu354–Leu535 form a disordered region. 3 stretches are compositionally biased toward polar residues: residues Thr364 to Ala384, Thr397 to Lys407, and Glu456 to Glu469. The span at Thr474–Lys483 shows a compositional bias: basic and acidic residues. Basic residues predominate over residues Lys484–Gly494. Composition is skewed to basic and acidic residues over residues Lys495–Pro509 and Glu524–Leu535.

This sequence belongs to the KNR4/SMI1 family.

The sequence is that of KNR4/SMI1 homolog from Kluyveromyces lactis (strain ATCC 8585 / CBS 2359 / DSM 70799 / NBRC 1267 / NRRL Y-1140 / WM37) (Yeast).